Reading from the N-terminus, the 174-residue chain is FMN-dependent NADPH-azoreductase (174 aa).

FMN-binding positions include 9–11 (TPR), 15–16 (RT), 73–76 (EYHS), and Gly-106.

It belongs to the azoreductase type 2 family. In terms of assembly, homotetramer. It depends on FMN as a cofactor.

Its function is as follows. Catalyzes the reductive cleavage of azo bond in aromatic azo compounds to the corresponding amines. Requires NADPH, but not NADH, as an electron donor for its activity. The chain is FMN-dependent NADPH-azoreductase (azr) from Bacillus subtilis (strain 168).